We begin with the raw amino-acid sequence, 438 residues long: MTPNWSELVAAADPALVLPSGERRAEVAVPGPLRLDALLDLGEGHAVGVVRSADAARWTVPLVRDGAGGVRRSRPGDGTAEHLVAALARRGATPDAAFVLEAFTGAAPVTGERGIIVDQTNESVIVGECAVVKWAVRLPAEGEPGSPAAQRIAALARGGFTEMPRPWGLLTLAEGAQPVLLASVVAYLPGALDGWDWAVDDVRRLARGELTMDQALLPAAQLGTLTARMHAALAARGRTPATAADVAAWGVRMREELDEAVASVPGAEGERLKAWAPRIADVYAELDALAGTPLIDVHGDFHVGQILRADGRYAVVDFDGNPVLPADQRAARQPAALDVVGMTASLDHVGRVVVFRTPDVDPAPVRAWIAAAQRSFLDAYRTTLARLDADDLFDDRLLTPLRYAQEVREYLYAVRHLPHWVYVPDLSLTDLLPERLKD.

ATP-binding positions include K133, 186–188, and D193; that span reads AYL. A D-glucosamine-binding site is contributed by D300. Mg(2+) is bound by residues Q305, D317, and D319. The Substrate specificity determinant motif motif lies at 405 to 420; that stretch reads QEVREYLYAVRHLPHW. E409 contributes to the D-glucosamine binding site.

Belongs to the actinobacterial glucosamine kinase family. In terms of assembly, monomer. Mg(2+) is required as a cofactor.

The enzyme catalyses D-glucosamine + ATP = D-glucosamine 6-phosphate + ADP + H(+). In terms of biological role, catalyzes the ATP-dependent phosphorylation of D-glucosamine (GlcN) to D-glucosamine 6-phosphate. May be involved in the phosphorylation of acquired extracellular GlcN derived from the hydrolysis of chitosan, i.e., in the incorporation of exogenous GlcN into the bacterial GlcNAc metabolism. To a lesser extent, is also active on glucose, but is unable to phosphorylate maltose, 18 other sugars and several aminoglycoside antibiotics. The protein is Glucosamine kinase of Streptacidiphilus jiangxiensis.